The sequence spans 317 residues: Spermidine synthase 2 (317 aa).

One can recognise a PABS domain in the interval 27 to 264 (PGWFSEISPL…GMIGFMLCST (238 aa)). Position 58 (Gln58) interacts with S-adenosyl 3-(methylsulfanyl)propylamine. Tyr88 provides a ligand contact to putrescine. S-adenosyl 3-(methylsulfanyl)propylamine contacts are provided by residues Gln89, Asp113, Glu133, 164-165 (DG), and Asp183. The active-site Proton acceptor is Asp183. Residues 183–186 (DSSD) and Tyr252 each bind putrescine.

It belongs to the spermidine/spermine synthase family.

The enzyme catalyses S-adenosyl 3-(methylsulfanyl)propylamine + putrescine = S-methyl-5'-thioadenosine + spermidine + H(+). It participates in amine and polyamine biosynthesis; spermidine biosynthesis; spermidine from putrescine: step 1/1. This is Spermidine synthase 2 from Datura stramonium (Jimsonweed).